The following is a 767-amino-acid chain: Ribonucleoside-diphosphate reductase subunit alpha (767 aa).

Residues 1–30 are disordered; that stretch reads MHPTLISAPISSSANDAHAGTSQGSHQGHR. Residues 9-26 show a composition bias toward polar residues; the sequence is PISSSANDAHAGTSQGSH. The ATP-cone domain maps to 31–120; that stretch reads IQVIRRDGSS…VWSLWKDTLV (90 aa). Substrate contacts are provided by residues Thr-228, 243-244, Gly-272, 460-464, and 631-635; these read SC, NLCCE, and PNTSS. A disulfide bond links Cys-244 and Cys-478. Asn-460 acts as the Proton acceptor in catalysis. Cys-462 (cysteine radical intermediate) is an active-site residue. Glu-464 acts as the Proton acceptor in catalysis.

Belongs to the ribonucleoside diphosphate reductase large chain family. Tetramer of two alpha and two beta subunits.

It carries out the reaction a 2'-deoxyribonucleoside 5'-diphosphate + [thioredoxin]-disulfide + H2O = a ribonucleoside 5'-diphosphate + [thioredoxin]-dithiol. Its activity is regulated as follows. Under complex allosteric control mediated by deoxynucleoside triphosphates and ATP binding. The type of nucleotide bound at the specificity site determines substrate preference. It seems probable that ATP makes the enzyme reduce CDP and UDP, dGTP favors ADP reduction and dTTP favors GDP reduction. Its function is as follows. Provides the precursors necessary for DNA synthesis. Catalyzes the biosynthesis of deoxyribonucleotides from the corresponding ribonucleotides. The chain is Ribonucleoside-diphosphate reductase subunit alpha (nrdA) from Synechocystis sp. (strain ATCC 27184 / PCC 6803 / Kazusa).